Here is a 371-residue protein sequence, read N- to C-terminus: Queuine tRNA-ribosyltransferase (371 aa).

Catalysis depends on Asp-89, which acts as the Proton acceptor. Substrate contacts are provided by residues 89–93 (DSGGF), Asp-143, Gln-185, and Gly-212. The segment at 243 to 249 (GVGKPED) is RNA binding. Asp-262 (nucleophile) is an active-site residue. The tract at residues 267-271 (TRNAR) is RNA binding; important for wobble base 34 recognition. Residues Cys-300, Cys-302, Cys-305, and His-331 each coordinate Zn(2+).

This sequence belongs to the queuine tRNA-ribosyltransferase family. In terms of assembly, homodimer. Within each dimer, one monomer is responsible for RNA recognition and catalysis, while the other monomer binds to the replacement base PreQ1. It depends on Zn(2+) as a cofactor.

The catalysed reaction is 7-aminomethyl-7-carbaguanine + guanosine(34) in tRNA = 7-aminomethyl-7-carbaguanosine(34) in tRNA + guanine. It functions in the pathway tRNA modification; tRNA-queuosine biosynthesis. In terms of biological role, catalyzes the base-exchange of a guanine (G) residue with the queuine precursor 7-aminomethyl-7-deazaguanine (PreQ1) at position 34 (anticodon wobble position) in tRNAs with GU(N) anticodons (tRNA-Asp, -Asn, -His and -Tyr). Catalysis occurs through a double-displacement mechanism. The nucleophile active site attacks the C1' of nucleotide 34 to detach the guanine base from the RNA, forming a covalent enzyme-RNA intermediate. The proton acceptor active site deprotonates the incoming PreQ1, allowing a nucleophilic attack on the C1' of the ribose to form the product. After dissociation, two additional enzymatic reactions on the tRNA convert PreQ1 to queuine (Q), resulting in the hypermodified nucleoside queuosine (7-(((4,5-cis-dihydroxy-2-cyclopenten-1-yl)amino)methyl)-7-deazaguanosine). This is Queuine tRNA-ribosyltransferase from Pseudomonas putida (strain ATCC 47054 / DSM 6125 / CFBP 8728 / NCIMB 11950 / KT2440).